The chain runs to 436 residues: Transcription factor MYB124 (436 aa).

The segment covering 1-11 has biased composition (basic residues); sequence MEDTKKKKKKN. The disordered stretch occupies residues 1-23; that stretch reads MEDTKKKKKKNINNNQDSKKKER. A Nuclear localization signal 1 motif is present at residues 8-15; sequence KKKNINNN. HTH myb-type domains lie at 20-71 and 72-126; these read KKER…YTYL and NSDF…KKRA. 2 DNA-binding regions (H-T-H motif) span residues 48-71 and 99-122; these read WAII…YTYL and WTEI…TTLC. A Nuclear localization signal 2 motif is present at residues 151–158; sequence PRKSENET. Positions 309–328 are disordered; the sequence is SWRQPDLHDSPASSEYSSGS. Over residues 319–328 the composition is skewed to polar residues; that stretch reads PASSEYSSGS.

In terms of assembly, interacts with RBR1. Expressed in all shoot organs with higher levels in leaves, stems, flowers, siliques and floral buds. Also detected in roots tips.

It is found in the nucleus. Functionally, transcription factor that binds to DNA in promoters cis-regulatory element 5'-GGCGCGC-3' of cell cycle genes, including cyclins, cyclin-dependent kinases (CDKs), and components of the pre-replication complex. Binds to DNA in promoters cis-regulatory element 5'-AGCCG-3' of auxin regulated genes (e.g. PIN3 and PIN7). Together with FAMA and MYB88, ensures that stomata contain just two guard cells (GCs) by enforcing a single symmetric precursor cell division before stomatal maturity. Represses the expression of the mitosis-inducing factors CDKB1-1 and CDKA-1, specifically required for the last guard mother cells (GMC) symmetric divisions in the stomatal pathway. Represses CYCA2-3 in newly formed guard cells. Together with MYB88, regulates stomata spacing by restricting divisions late in the stomatal cell lineage thus limiting the number of GMC divisions. In collaboration with CDKB1-1 and CDKB1-2, restrict the G1/S transition and chloroplast and nuclear number during stomatal formation, and normally maintain fate and developmental progression throughout the stomatal cell lineage. Also involved in the shape regulation of pavement cells. Involved in sensing and/or transducing abiotic stress (e.g. drought and salt), probably via the positive regulation of NAC019. Regulates female reproduction being required for entry into megasporogenesis, probably via the regulation of cell cycle genes. Promotes histone H3K27me3 marks and represses stem cell gene expression. Required for lateral roots (LRs) initiation via the regulation of PIN3 expression in an auxin-dependent manner. Involved in responses to gravity stimulation in primary roots by regulating the transcription of PIN3 and PIN7 in gravity-sensing cells, thus modulating auxin asymmetric redistribution. The polypeptide is Transcription factor MYB124 (Arabidopsis thaliana (Mouse-ear cress)).